We begin with the raw amino-acid sequence, 515 residues long: C-glycoside 3-oxidase (515 aa).

E41 contacts FAD. A compositionally biased stretch (basic and acidic residues) spans 62 to 82; it reads ERAHAQRRSEGPHAREDDDRV. A disordered region spans residues 62–90; it reads ERAHAQRRSEGPHAREDDDRVGGIVKSAQ. FAD is bound by residues S118, N120, M124, T129, A131, and V237. Residue H444 is the Proton acceptor of the active site. FAD-binding residues include N478 and T490.

It belongs to the GMC oxidoreductase family. In terms of assembly, monomer. Requires FAD as cofactor.

It carries out the reaction isoorientin + O2 = 3''-dehydroisoorientin + H2O2. The enzyme catalyses mangiferin + O2 = 3'-dehydromangiferin + H2O2. FAD-dependent C-glycoside-metabolizing enzyme that participates in the degradation of certain C-glycosides by catalyzing the oxidation of the hydroxyl group at the C3 position of the sugar moiety. Shows oxidase activity toward C-glycosides such as isoorientin and mangiferin but cannot use carminic acid, puerarin, orientin or aloesin. Shows weak activity (100 to 1000-fold lower) with O-glycosides. Probably plays a crucial role in the metabolism of C-glycosides in nature. In Microbacterium trichothecenolyticum (Aureobacterium trichothecenolyticum), this protein is C-glycoside 3-oxidase.